The following is a 256-amino-acid chain: Sorbitol dehydrogenase (256 aa).

NAD(+) contacts are provided by residues 15–17 (RGI), Asp-36, 59–60 (DV), Asn-86, Tyr-152, Lys-156, and 182–187 (PGVVDG). Tyr-152 serves as the catalytic Proton acceptor.

It belongs to the short-chain dehydrogenases/reductases (SDR) family. In terms of assembly, homodimer. May function as a tetramer in vivo.

The enzyme catalyses keto-D-fructose + NADH + H(+) = D-sorbitol + NAD(+). It carries out the reaction galactitol + NAD(+) = keto-D-tagatose + NADH + H(+). The catalysed reaction is L-iditol + NAD(+) = keto-L-sorbose + NADH + H(+). With respect to regulation, inhibited by DTT, N-bromosuccinimide and iodoacetic acid. Catalyzes the oxidation of D-sorbitol (D-glucitol) to D-fructose. Can also catalyze the oxidation of galactitol to D-tagatose and the oxidation of L-iditol, with lower efficiency. The sequence is that of Sorbitol dehydrogenase (polS) from Cereibacter sphaeroides (Rhodobacter sphaeroides).